Reading from the N-terminus, the 118-residue chain is Large ribosomal subunit protein bL20 (118 aa).

It belongs to the bacterial ribosomal protein bL20 family.

Its function is as follows. Binds directly to 23S ribosomal RNA and is necessary for the in vitro assembly process of the 50S ribosomal subunit. It is not involved in the protein synthesizing functions of that subunit. In Desulforamulus reducens (strain ATCC BAA-1160 / DSM 100696 / MI-1) (Desulfotomaculum reducens), this protein is Large ribosomal subunit protein bL20.